Reading from the N-terminus, the 469-residue chain is NADH-quinone oxidoreductase subunit N (469 aa).

14 helical membrane passes run 9 to 29, 40 to 60, 76 to 96, 105 to 125, 128 to 148, 162 to 182, 201 to 221, 234 to 254, 265 to 285, 294 to 316, 327 to 347, 365 to 385, 402 to 422, and 448 to 468; these read PLLM…LIAG, VGVM…VQMV, ATGV…AVAG, EAET…LAGA, LLLL…LVGL, YLMG…LYGL, VAVA…AGGV, ANAT…LVAL, LAWP…GNLA, RLLG…VAGA, YLGG…ALPG, AAAL…AVFI, LAVV…RWII, and VLAA…WQLV.

It belongs to the complex I subunit 2 family. NDH-1 is composed of 14 different subunits. Subunits NuoA, H, J, K, L, M, N constitute the membrane sector of the complex.

It is found in the cell membrane. The enzyme catalyses a quinone + NADH + 5 H(+)(in) = a quinol + NAD(+) + 4 H(+)(out). Its function is as follows. NDH-1 shuttles electrons from NADH, via FMN and iron-sulfur (Fe-S) centers, to quinones in the respiratory chain. The immediate electron acceptor for the enzyme in this species is believed to be a menaquinone. Couples the redox reaction to proton translocation (for every two electrons transferred, four hydrogen ions are translocated across the cytoplasmic membrane), and thus conserves the redox energy in a proton gradient. The chain is NADH-quinone oxidoreductase subunit N from Mycobacterium sp. (strain JLS).